We begin with the raw amino-acid sequence, 386 residues long: Phosphoglycerate kinase (386 aa).

Residues 21–23 (DLN), R36, 59–62 (HLGR), R113, and R146 contribute to the substrate site. Residues K197, E314, and 340 to 343 (GGDT) each bind ATP.

This sequence belongs to the phosphoglycerate kinase family. In terms of assembly, monomer.

Its subcellular location is the cytoplasm. The catalysed reaction is (2R)-3-phosphoglycerate + ATP = (2R)-3-phospho-glyceroyl phosphate + ADP. The protein operates within carbohydrate degradation; glycolysis; pyruvate from D-glyceraldehyde 3-phosphate: step 2/5. The polypeptide is Phosphoglycerate kinase (Azotobacter vinelandii (strain DJ / ATCC BAA-1303)).